Reading from the N-terminus, the 1961-residue chain is MSEEPKEKPAKPAHRKRKGKKSDANASYLRAARAGHLEKALDYIKNGVDVNICNQNGLNALHLASKEGHVEVVSELLQREANVDAATKKGNTALHIASLAGQAEVVKVLVTNGANVNAQSQNGFTPLYMAAQENHLEVVRFLLDNGASQSLATEDGFTPLAVALQQGHDQVVSLLLENDTKGKVRLPALHIAARKDDTKAAALLLQNDTNADVESKSGFTPLHIAAHYGNINVATLLLNRAAAVDFTARNDITPLHVASKRGNANMVKLLLDRGAKIDAKTRDGLTPLHCGARSGHEQVVEMLLDRSAPILSKTKNGLSPLHMATQGDHLNCVQLLLQHNVPVDDVTNDYLTALHVAAHCGHYKVAKVLLDKKASPNAKALNGFTPLHIACKKNRIRVMELLLKHGASIQAVTESGLTPIHVAAFMGHVNIVSQLMHHGASPNTTNVRGETALHMAARSGQAEVVRYLVQDGAQVEAKAKDDQTPLHISARLGKADIVQQLLQQGASPNAATTSGYTPLHLAAREGHEDVAAFLLDHGASLSITTKKGFTPLHVAAKYGKLEVASLLLQKSASPDAAGKSGLTPLHVAAHYDNQKVALLLLDQGASPHAAAKNGYTPLHIAAKKNQMDIATSLLEYGADANAVTRQGIASVHLAAQEGHVDMVSLLLSRNANVNLSNKSGLTPLHLAAQEDRVNVAEVLVNQGAHVDAQTKMGYTPLHVGCHYGNIKIVNFLLQHSAKVNAKTKNGYTALHQAAQQGHTHIINVLLQNNASPNELTVNGNTALAIARRLGYISVVDTLKVVTEEIMTTTTITEKHKMNVPETMNEVLDMSDDEVRKASAPEKLSDGEYISDGEEGDKCTWFKIPKVQEVLVKSEDAITGDTDKYLGPQDLKELGDDSLPAEGYVGFSLGARSASLRSFSSDRSYTLNRSSYARDSMMIEELLVPSKEQHLTFTREFDSDSLRHYSWAADTLDNVNLVSSPVHSGFLVSFMVDARGGSMRGSRHHGMRIIIPPRKCTAPTRITCRLVKRHKLANPPPMVEGEGLASRLVEMGPAGAQFLGPVIVEIPHFGSMRGKERELIVLRSENGETWKEHQFDSKNEDLAELLNGMDEELDSPEELGTKRICRIITKDFPQYFAVVSRIKQESNQIGPEGGILSSTTVPLVQASFPEGALTKRIRVGLQAQPVPEETVKKILGNKATFSPIVTVEPRRRKFHKPITMTIPVPPPSGEGVSNGYKGDATPNLRLLCSITGGTSPAQWEDITGTTPLTFIKDCVSFTTNVSARFWLADCHQVLETVGLASQLYRELICVPYMAKFVVFAKTNDPVESSLRCFCMTDDRVDKTLEQQENFEEVARSKDIEVLEGKPIYVDCYGNLAPLTKGGQQLVFNFYSFKENRLPFSIKIRDTSQEPCGRLSFLKEPKTTKGLPQTAVCNLNITLPAHKKAEKADRRQSFASLALRKRYSYLTEPSMSPQSPCERTDIRMAIVADHLGLSWTELARELNFSVDEINQIRVENPNSLISQSFMLLKKWVTRDGKNATTDALTSVLTKINRIDIVTLLEGPIFDYGNISGTRSFADENNVFHDPVDGHPSFQVELETPMGLYCTPPNPFQQDDHFSDISSIESPFRTPSRLSDGLVPSQGNIEHPTGGPPVVTAEDTSLEDSKMDDSVTVTDPADPLDVDESQLKDLCQSECAQCWASVPGIPNDGRQAEPLRPQTRKVGMSSEQQEKGKSGPDEEVTEDKVKSLFEDIQLEEVEAEEMTEDQGQAMLNRVQRAELAMSSLAGWQNETPSGSLESPAQARRLTGGLLDRLDDSSDQARDSITSYLTGEPGKIEANGNHTAEVIPEAKAKPYFPESQNDIGKQSIKENLKPKTHGCGRTEEPVSPLTAYQKSLEETSKLVIEDAPKPCVPVGMKKMTRTTADGKARLNLQEEEGSTRSEPKQGEGYKVKTKKEIRNVEKKTH.

A compositionally biased stretch (basic and acidic residues) spans 1–10 (MSEEPKEKPA). The segment at 1-25 (MSEEPKEKPAKPAHRKRKGKKSDAN) is disordered. Basic residues predominate over residues 11 to 20 (KPAHRKRKGK). Ser22 is modified (phosphoserine). ANK repeat units follow at residues 56 to 85 (NGLN…NVDA), 89 to 118 (KGNT…NVNA), 122 to 151 (NGFT…SQSL), 155 to 184 (DGFT…KGKV), 186 to 213 (LPAL…NADV), 217 to 246 (SGFT…AVDF), 250 to 279 (NDIT…KIDA), 283 to 312 (DGLT…PILS), 316 to 345 (NGLS…PVDD), 349 to 378 (DYLT…SPNA), 382 to 411 (NGFT…SIQA), 415 to 444 (SGLT…SPNT), 448 to 477 (RGET…QVEA), 481 to 510 (DDQT…SPNA), 514 to 543 (SGYT…SLSI), 547 to 576 (KGFT…SPDA), 580 to 609 (SGLT…SPHA), 613 to 642 (NGYT…DANA), 646 to 675 (QGIA…NVNL), 679 to 708 (SGLT…HVDA), 712 to 741 (MGYT…KVNA), 745 to 774 (NGYT…SPNE), and 778 to 807 (NGNT…EIMT). At Ser606 the chain carries Phosphoserine. At Leu732 the chain carries Phosphoserine. 10 positions are modified to phosphoserine: Ser830, Ser844, Ser850, Ser873, Ser914, Ser917, Ser923, Ser958, Ser960, and Ser1114. 2 ZU5 domains span residues 985–1140 (FLVS…VVSR) and 1142–1289 (KQES…LADC). Residues 1274 to 1408 (VSFTTNVSAR…SIKIRDTSQE (135 aa)) form a UPA domain region. Ser1451, Ser1462, Ser1470, Ser1473, and Gly1560 each carry phosphoserine. A Death domain is found at 1478-1562 (TDIRMAIVAD…DIVTLLEGPI (85 aa)). Disordered stretches follow at residues 1606-1678 (PNPF…DPLD), 1698-1740 (SVPG…VTED), 1784-1818 (WQNE…DQAR), 1844-1884 (PEAK…PVSP), and 1915-1961 (MTRT…KKTH). The span at 1725 to 1740 (QQEKGKSGPDEEVTED) shows a compositional bias: basic and acidic residues. The span at 1784-1795 (WQNETPSGSLES) shows a compositional bias: polar residues. Phosphoserine is present on residues Ser1795, Ser1813, and Ser1883. The span at 1808-1818 (DRLDDSSDQAR) shows a compositional bias: basic and acidic residues. The span at 1933 to 1961 (GSTRSEPKQGEGYKVKTKKEIRNVEKKTH) shows a compositional bias: basic and acidic residues.

As to quaternary structure, may be a constituent of a NFASC/NRCAM/ankyrin G complex. Interacts with RHBG. Directly interacts with DMD and betaDAG1; this interaction does not interfere with DMD-binding and is required for DMD and betaDAG1 retention at costameres. Interacts (via N-terminal ANK repeats) with SCHIP1 isoform 7 (via C-terminus); this interaction is required for the localization at axon initial segments (AISs) and nodes of Ranvier (NRs). Interacts with PLEC and FLNC. Interacts with KCNA1; this inhibits channel activity. Interacts with SCN5A. Interacts with PKP2 and GJA1/CX43. As to expression, expressed in many epithelial tissues, muscles and axons. Expressed in kidney, brain, skin, lung, liver, intestine, pancreas, heart and testis (at protein level). In testis, expressed in Leydig cells, but very weakly or not at all in Sertoli cells or seminiferous tubules. Expressed in macrophages (at protein level).

Its subcellular location is the cytoplasm. The protein localises to the cytoskeleton. The protein resides in the cell projection. It is found in the axon. It localises to the cell membrane. Its subcellular location is the sarcolemma. The protein localises to the postsynaptic cell membrane. The protein resides in the lysosome. It is found in the T-tubule. Functionally, membrane-cytoskeleton linker. May participate in the maintenance/targeting of ion channels and cell adhesion molecules at the nodes of Ranvier and axonal initial segments. In skeletal muscle, required for costamere localization of DMD and betaDAG1. Regulates KCNA1 channel activity in function of dietary Mg(2+) levels, and thereby contributes to the regulation of renal Mg(2+) reabsorption. Required for intracellular adhesion and junctional conductance in myocytes, potentially via stabilization of GJA1/CX43 protein abundance and promotion of PKP2, GJA1/CX43, and SCN5A/Nav1.5 localization to cell-cell junctions. This Mus musculus (Mouse) protein is Ankyrin-3 (Ank3).